We begin with the raw amino-acid sequence, 661 residues long: uncharacterized protein (661 aa).

The next 7 membrane-spanning stretches (helical) occupy residues 37-57 (VFLG…LFLS), 87-107 (INSP…AVFI), 120-140 (WLLL…NVIL), 158-178 (VFWQ…PIIV), 243-263 (LLDI…LYTI), 266-286 (TLMW…IAIG), and 341-361 (FNLL…YNYF). Positions 123-410 (LGVLLSLLFV…VTNQIQNITE (288 aa)) constitute an ABC transmembrane type-1 domain. In terms of domain architecture, ABC transporter spans 453–659 (VALENVTLSP…AEGRWQISPI (207 aa)). Residue 487-494 (GPSGSGKS) coordinates ATP.

This sequence belongs to the ABC transporter superfamily.

It is found in the cell inner membrane. This is an uncharacterized protein from Synechocystis sp. (strain ATCC 27184 / PCC 6803 / Kazusa).